The sequence spans 324 residues: MDNIMQSSMPPGFRFHPTEEELVGYYLDRKINSMKSALDVIVEIDLYKMEPWDIQARCKLGYEEQNEWYFFSHKDRKYPTGTRTNRATAAGFWKATGRDKAVLSKNSVIGMRKTLVYYKGRAPNGRKSDWIMHEYRLQNSELAPVQEEGWVVCRAFRKPIPNQRPLGYEPWQNQLYHVESSNNYSSSVTMNTSHHIGASSSSHNLNQMLMSNNHYNPNNTSSSMHQYGNIELPQLDSPSLSPSLGTNKDQNESFEQEEEKSFNCVDWRTLDTLLETQVIHPHNPNILMFETQSYNPAPSFPSMHQSYNEVEANIHHSLGCFPDS.

Residues 9 to 158 (MPPGFRFHPT…GWVVCRAFRK (150 aa)) enclose the NAC domain. A DNA-binding region spans residues 109 to 164 (IGMRKTLVYYKGRAPNGRKSDWIMHEYRLQNSELAPVQEEGWVVCRAFRKPIPNQR). Low complexity predominate over residues 232 to 244 (LPQLDSPSLSPSL). The interval 232 to 259 (LPQLDSPSLSPSLGTNKDQNESFEQEEE) is disordered.

The protein belongs to the plant vascular related NAC-domain protein family. Forms homodimer and heterodimers with other VND proteins (e.g. NAC037/VND1, NAC076/VND2 and NAC105/VND3) via their N-termini. Interacts with NAC083/VNI2. Expressed in developing protoxylems in roots and shoots. Detected in root protoxylem poles and in vessels of protoxylems, outermost metaxylems, inner metaxylems, shoots and hypocotyls. Expressed in roots, hypocotyls, cotyledons and leaves. Accumulates in the xylem but not in interfascicular fibers or pith cells in inflorescence stems. Present in developing vessels of the secondary xylem in roots undergoing secondary growth.

The protein resides in the nucleus. In terms of biological role, transcription activator that binds to the secondary wall NAC binding element (SNBE), 5'-(T/A)NN(C/T)(T/C/G)TNNNNNNNA(A/C)GN(A/C/T)(A/T)-3', in the promoter of target genes (e.g. genes involved in secondary wall biosynthesis, cell wall modification such as xylan accumulation, and programmed cell death). Involved in xylem formation in roots and shoots, especially regulating protoxylem vessel differentiation by promoting immature xylem vessel-specific genes expression. Can activate the expression of several genes including XCP1, MYB46, NAC010/SND3, MYB103, MYB58, MYB63, MYB83, KNAT7, ASL19 and ASL20. Required for the soilborne fungal pathogen Verticillium longisporum-induced transdifferentiation of chloroplast-containing bundle sheath cells to functional xylem elements leading to stunted growth, vein clearing, and leaf chloroses, as well as xylem hyperplasia within the vasculature of leaves, hypocotyls, and roots due to reinitiation of cambial activity and transdifferentiation of xylem parenchyma cells. This developmental reprogramming also mediates an increased drought stress tolerance. The polypeptide is NAC domain-containing protein 30 (Arabidopsis thaliana (Mouse-ear cress)).